A 578-amino-acid chain; its full sequence is 2-succinyl-5-enolpyruvyl-6-hydroxy-3-cyclohexene-1-carboxylate synthase (578 aa).

The protein belongs to the TPP enzyme family. MenD subfamily. Homodimer. The cofactor is Mg(2+). Mn(2+) serves as cofactor. Requires thiamine diphosphate as cofactor.

The catalysed reaction is isochorismate + 2-oxoglutarate + H(+) = 5-enolpyruvoyl-6-hydroxy-2-succinyl-cyclohex-3-ene-1-carboxylate + CO2. Its pathway is quinol/quinone metabolism; 1,4-dihydroxy-2-naphthoate biosynthesis; 1,4-dihydroxy-2-naphthoate from chorismate: step 2/7. It functions in the pathway quinol/quinone metabolism; menaquinone biosynthesis. In terms of biological role, catalyzes the thiamine diphosphate-dependent decarboxylation of 2-oxoglutarate and the subsequent addition of the resulting succinic semialdehyde-thiamine pyrophosphate anion to isochorismate to yield 2-succinyl-5-enolpyruvyl-6-hydroxy-3-cyclohexene-1-carboxylate (SEPHCHC). In Prosthecochloris aestuarii (strain DSM 271 / SK 413), this protein is 2-succinyl-5-enolpyruvyl-6-hydroxy-3-cyclohexene-1-carboxylate synthase.